Reading from the N-terminus, the 360-residue chain is Tubulin-like protein CetZ2 (360 aa).

GTP-binding positions include 10-14, 65-66, 106-108, glutamate 138, asparagine 165, and asparagine 183; these read QAGGK, GG, and GSG. Positions 334–354 are enriched in basic and acidic residues; that stretch reads EAIDKAETEPREDPKGMWHSD. A disordered region spans residues 334–360; sequence EAIDKAETEPREDPKGMWHSDDLDDLL.

Belongs to the CetZ family.

It localises to the cytoplasm. Functionally, involved in cell shape control. In Haloferax volcanii (strain ATCC 29605 / DSM 3757 / JCM 8879 / NBRC 14742 / NCIMB 2012 / VKM B-1768 / DS2) (Halobacterium volcanii), this protein is Tubulin-like protein CetZ2.